The sequence spans 207 residues: Guanylate kinase (207 aa).

A Guanylate kinase-like domain is found at 7–185 (GIVLVLCAPS…AYDELRAAYI (179 aa)). Position 14–21 (14–21 (APSGTGKT)) interacts with ATP.

The protein belongs to the guanylate kinase family.

It is found in the cytoplasm. The enzyme catalyses GMP + ATP = GDP + ADP. Essential for recycling GMP and indirectly, cGMP. This chain is Guanylate kinase, found in Nitratidesulfovibrio vulgaris (strain ATCC 29579 / DSM 644 / CCUG 34227 / NCIMB 8303 / VKM B-1760 / Hildenborough) (Desulfovibrio vulgaris).